We begin with the raw amino-acid sequence, 932 residues long: 3-hydroxy-3-methylglutaryl-coenzyme A reductase (932 aa).

The next 6 membrane-spanning stretches (helical) occupy residues 20 to 40 (VIVC…FTGL), 59 to 79 (LSSD…YLYL), 92 to 112 (ILGI…SAVI), 113 to 133 (HLFG…LLLI), 162 to 182 (MAIL…VISI), and 193 to 213 (VFCC…MTFF). Asparagine 279 is a glycosylation site (N-linked (GlcNAc...) asparagine). Residues 322-342 (ILTAILATVLASHYIFFSDLA) form a helical membrane-spanning segment. Residues 343–467 (TYPEKRVSIM…APRPMPELLE (125 aa)) are linker. The segment covering 357–367 (VVNPGSDHEDA) has biased composition (basic and acidic residues). The segment at 357 to 442 (VVNPGSDHED…SGSEDEEEEV (86 aa)) is disordered. Residues 374 to 403 (GTLSSSPSTSDVRVIESMTSRTQACQTDPV) are compositionally biased toward polar residues. Low complexity predominate over residues 406 to 421 (SPRNSRSSSPVSSHSV). A catalytic region spans residues 468 to 932 (ILNVGKGPNA…APGTCTANAS (465 aa)). Active-site charge relay system residues include glutamate 575, lysine 707, and aspartate 783. Asparagine 850 is a glycosylation site (N-linked (GlcNAc...) asparagine). Histidine 882 functions as the Proton donor in the catalytic mechanism. Asparagine 886 is a glycosylation site (N-linked (GlcNAc...) asparagine). Position 888 is a phosphoserine; by AMPK (serine 888).

The protein belongs to the HMG-CoA reductase family.

Its subcellular location is the endoplasmic reticulum membrane. It carries out the reaction (R)-mevalonate + 2 NADP(+) + CoA = (3S)-3-hydroxy-3-methylglutaryl-CoA + 2 NADPH + 2 H(+). It participates in metabolic intermediate biosynthesis; (R)-mevalonate biosynthesis; (R)-mevalonate from acetyl-CoA: step 3/3. In terms of biological role, this transmembrane glycoprotein is involved in the control of cholesterol biosynthesis. It is the rate-limiting enzyme of sterol biosynthesis. This chain is 3-hydroxy-3-methylglutaryl-coenzyme A reductase (HMGCR), found in Strongylocentrotus purpuratus (Purple sea urchin).